The chain runs to 237 residues: uncharacterized protein (237 aa).

The N-terminal stretch at 1-27 (MKSFLRKPKFWLLLLGGLSTSSIILSA) is a signal peptide. Residue Cys28 is the site of N-palmitoyl cysteine attachment. Cys28 is lipidated: S-diacylglycerol cysteine.

Belongs to the MG307/MG309/MG338 family.

It localises to the membrane. This is an uncharacterized protein from Mycoplasma pneumoniae (strain ATCC 29342 / M129 / Subtype 1) (Mycoplasmoides pneumoniae).